A 1007-amino-acid polypeptide reads, in one-letter code: Protein vav-1 (1007 aa).

The Calponin-homology (CH) domain occupies 37–151 (CDLWIGCARW…TLSFLSHTKE (115 aa)). The interval 151 to 239 (ESLSRGVDPF…ENDLQNTPTL (89 aa)) is AC. The segment at 153-176 (LSRGVDPFPDTDNNQEGTSNGSEF) is disordered. Residues 163–174 (TDNNQEGTSNGS) show a composition bias toward polar residues. 3 positions are modified to phosphotyrosine: Tyr-183, Tyr-200, and Tyr-217. The 198-residue stretch at 240 to 437 (KRNRCIRELY…EDVCNYINEE (198 aa)) folds into the DH domain. The PH domain occupies 470–598 (RVNLDGEVKM…WMTALLLSKS (129 aa)). The segment at 610–664 (NHKVAFHSFRVDVKNPATCDVCDKLMKGLQYQGYKCESCNMSMHKECLGLKKCEA) adopts a Phorbol-ester/DAG-type zinc-finger fold. The 63-residue stretch at 688–750 (HEGDIVVANS…HLDHVSQSRT (63 aa)) folds into the SH3 1 domain. The disordered stretch occupies residues 778–817 (LPNKLLSDGSSRSLSGPHGSRSSRNSSSSTINGSMDSVPR). The span at 782–814 (LLSDGSSRSLSGPHGSRSSRNSSSSTINGSMDS) shows a compositional bias: low complexity. The SH2 domain occupies 831–925 (WYMGEMERAK…ALDTCLKNPY (95 aa)). The SH3 2 domain maps to 926–991 (SQCKVFKAVH…PLSYVKPYDP (66 aa)).

Post-translationally, GEF activity is regulated by phosphorylation on tyrosine residues. In terms of tissue distribution, strong expression in the pharynx, proximal gonad, spermatheca, intestine and rectal epithelia.

Functionally, acts as a guanine nucleotide exchange factor (GEF) for Rho GTPase. Has a critical roles in the generation of rhythmic behaviors: feeding, defecation and ovulation by dynamically regulating the concentration of intracellular calcium. Plays a role in male tail tip morphogenesis. The protein is Protein vav-1 of Caenorhabditis elegans.